The chain runs to 311 residues: Pyrimidine-specific ribonucleoside hydrolase RihA (311 aa).

H240 is an active-site residue.

This sequence belongs to the IUNH family. RihA subfamily.

Functionally, hydrolyzes cytidine or uridine to ribose and cytosine or uracil, respectively. The sequence is that of Pyrimidine-specific ribonucleoside hydrolase RihA from Klebsiella pneumoniae subsp. pneumoniae (strain ATCC 700721 / MGH 78578).